The sequence spans 155 residues: Small ribosomal subunit protein uS7c (155 aa).

The protein belongs to the universal ribosomal protein uS7 family. In terms of assembly, part of the 30S ribosomal subunit.

Its subcellular location is the plastid. It localises to the chloroplast. One of the primary rRNA binding proteins, it binds directly to 16S rRNA where it nucleates assembly of the head domain of the 30S subunit. This Chaetosphaeridium globosum (Charophycean green alga) protein is Small ribosomal subunit protein uS7c (rps7).